Reading from the N-terminus, the 1369-residue chain is DNA-directed RNA polymerase subunit beta' (1369 aa).

The segment at 1-43 is disordered; it reads MTSSSPKTRKSSTKSKAKRGSKSKKAAEIKAVQRLSKTPPPFR. Residues 7–24 show a composition bias toward basic residues; sequence KTRKSSTKSKAKRGSKSK. Zn(2+) contacts are provided by cysteine 253, cysteine 320, cysteine 327, and cysteine 330. The disordered stretch occupies residues 1294 to 1369; sequence TVDMPSSPVA…LQEEGLLSDE (76 aa). Positions 1342-1351 are enriched in acidic residues; the sequence is DDELSAEDQM. Low complexity predominate over residues 1357-1369; that stretch reads LEGLQEEGLLSDE.

Belongs to the RNA polymerase beta' chain family. RpoC2 subfamily. As to quaternary structure, in cyanobacteria the RNAP catalytic core is composed of 2 alpha, 1 beta, 1 beta', 1 gamma and 1 omega subunit. When a sigma factor is associated with the core the holoenzyme is formed, which can initiate transcription. Zn(2+) is required as a cofactor.

The enzyme catalyses RNA(n) + a ribonucleoside 5'-triphosphate = RNA(n+1) + diphosphate. In terms of biological role, DNA-dependent RNA polymerase catalyzes the transcription of DNA into RNA using the four ribonucleoside triphosphates as substrates. This Prochlorococcus marinus (strain NATL1A) protein is DNA-directed RNA polymerase subunit beta'.